The primary structure comprises 366 residues: Small ribosomal subunit biogenesis GTPase RsgA (366 aa).

Residues 107 to 266 (RSEGQILAAN…LIDTPGLRGV (160 aa)) enclose the CP-type G domain. GTP is bound by residues 154–157 (TKAD) and 208–216 (GQSGAGKST). Zn(2+)-binding residues include Cys289, Cys294, His296, and Cys302.

This sequence belongs to the TRAFAC class YlqF/YawG GTPase family. RsgA subfamily. Monomer. Associates with 30S ribosomal subunit, binds 16S rRNA. Requires Zn(2+) as cofactor.

The protein localises to the cytoplasm. In terms of biological role, one of several proteins that assist in the late maturation steps of the functional core of the 30S ribosomal subunit. Helps release RbfA from mature subunits. May play a role in the assembly of ribosomal proteins into the subunit. Circularly permuted GTPase that catalyzes slow GTP hydrolysis, GTPase activity is stimulated by the 30S ribosomal subunit. In Streptomyces coelicolor (strain ATCC BAA-471 / A3(2) / M145), this protein is Small ribosomal subunit biogenesis GTPase RsgA.